The primary structure comprises 184 residues: Photosynthetic apparatus regulatory protein RegA (184 aa).

The Response regulatory domain occupies 14–128 (SLLLVDDDNA…DITNALLAKG (115 aa)). D63 is modified (4-aspartylphosphate).

Post-translationally, phosphorylated by RegB.

In terms of biological role, member of the two-component regulatory system RegB/RegA. Involved in transactivating anaerobic expression of the photosynthetic apparatus. It is a transcriptional regulator that is responsible for activating expression of the puf, puh, and puc operons in response to a decrease in oxygen tension. In Rhodobacter capsulatus (Rhodopseudomonas capsulata), this protein is Photosynthetic apparatus regulatory protein RegA (regA).